A 582-amino-acid polypeptide reads, in one-letter code: Enhancer of polycomb-like protein 1 (582 aa).

Residues 238-295 adopt a coiled-coil conformation; it reads RDAQSADKLRRLRKELEDARQLVALVRQRELARKEMLSMERQIFLQRSEVKEMKRKLN. The segment at 323 to 351 is disordered; that stretch reads PEQPKKKPAEAPAAQRPTAPQIRMPQKPG. Positions 352-385 form a coiled coil; it reads TQAADDMQLLEDVQAEKENEILRDIKQNIAKHIK. The segment covering 539–555 has biased composition (low complexity); sequence AQAHAQAQAQKRLQAEQ. A disordered region spans residues 539–582; that stretch reads AQAHAQAQAQKRLQAEQTTTNNGPPNIGHTMGSNPGPGAVASTS.

The protein belongs to the enhancer of polycomb family. Component of the NuA4 histone acetyltransferase complex.

The protein resides in the nucleus. Its function is as follows. Component of the NuA4 histone acetyltransferase complex which is involved in transcriptional activation of selected genes principally by acetylation of nucleosomal histone H4 and H2A. The NuA4 complex is also involved in DNA repair. Involved in gene silencing by neighboring heterochromatin, blockage of the silencing spreading along the chromosome, and required for cell cycle progression through G2/M. The chain is Enhancer of polycomb-like protein 1 (epl1) from Aspergillus fumigatus (strain ATCC MYA-4609 / CBS 101355 / FGSC A1100 / Af293) (Neosartorya fumigata).